Here is a 657-residue protein sequence, read N- to C-terminus: MIGTVLSNRYKIEEEIGVGGTAVVYKAMDTLLNRHVAVKVLKHEFTEDEEFVFKFKREASAAARIANANIVNIYDVGADGNVNYIVMEYVAGKTLKKLIKENGKIEFNKIIDYATQIAKALNFAHKNGIVHRDIKPHNIMVTDDDIIKVTDFGIAKASNESTITTTNKVVGSAHYLSPEQAQGIPVDCRTDIYSFGIVLYEMATGKVPYDADTPVSIALKHIQDAAVPPNELNKDIPIALNKMILRCIEKKPENRYQNANEILDELSNVKNNYVNDDEEFTRVMDPAQIQNESNPNNKLDNDDTYYNGEPYNKEQPQEEPQEENEEPKNKIKGNNMLSGKAKKALVASIIVVLILAGSALAFSMGSGIFKPNSNSVSKVKVPKIIGLSESDAKGKVEDAKLKFQVVDRVKSSKPKGTVVTCYPNEDTEVDSGTVVRVDISSGDTDQTLPSLVGLPESAARAQIKQYGCNVGSVTQEYSDDVAQGNVISQSPSEGSQIKKGMTIDLVISRGPEVKKATVPSVYGKTSDSASSILQNAGFGVNVQNKDVTNADQNGIVIEEYPNGYVNKGTTVTIVIGRFNSTAVQPPNNNNGNGNQNQNQNKTPDTNHDDSKAPTGGNNDNQNQNNTTNPNGTQPAGGNVTGTGNGNVTNTPNGTGQK.

The Protein kinase domain maps to 10–274 (YKIEEEIGVG…ELSNVKNNYV (265 aa)). Residues 16-24 (IGVGGTAVV) and Lys-39 contribute to the ATP site. Asp-143 (proton acceptor) is an active-site residue. A disordered region spans residues 286 to 334 (PAQIQNESNPNNKLDNDDTYYNGEPYNKEQPQEEPQEENEEPKNKIKGN). Over residues 288–298 (QIQNESNPNNK) the composition is skewed to polar residues. 3 consecutive PASTA domains span residues 375–441 (SVSK…DISS), 443–509 (DTDQ…VISR), and 512–577 (EVKK…VIGR). The tract at residues 581–657 (TAVQPPNNNN…TNTPNGTGQK (77 aa)) is disordered. Low complexity-rich tracts occupy residues 584-600 (QPPN…QNQN), 613-637 (PTGG…PAGG), and 645-657 (GNVT…TGQK).

Belongs to the protein kinase superfamily. Ser/Thr protein kinase family.

The catalysed reaction is L-seryl-[protein] + ATP = O-phospho-L-seryl-[protein] + ADP + H(+). It catalyses the reaction L-threonyl-[protein] + ATP = O-phospho-L-threonyl-[protein] + ADP + H(+). The sequence is that of Probable serine/threonine-protein kinase CA_C1728 from Clostridium acetobutylicum (strain ATCC 824 / DSM 792 / JCM 1419 / IAM 19013 / LMG 5710 / NBRC 13948 / NRRL B-527 / VKM B-1787 / 2291 / W).